The primary structure comprises 204 residues: Bcl-2-like protein 10 (204 aa).

Residues 86–105 (LSDSPGPTWGRVVTLVTFAG) carry the BH1 motif. The tract at residues 118–133 (WKKWGFQPRLKEQEGD) is required for Ca(2+) binding. Residues lysine 119, lysine 120, and lysine 128 each participate in a glycyl lysine isopeptide (Lys-Gly) (interchain with G-Cter in ubiquitin) cross-link. The BH2 signature appears at 156–167 (WLQAQGGWDGFC). Residues 183-200 (LVQAFLSCLLTTAFIYLW) traverse the membrane as a helical segment.

This sequence belongs to the Bcl-2 family. As to quaternary structure, interacts with BAX. Interacts with BCL2 and BCL2L1/BCLX. Interacts with APAF1. Interacts with ITPR1, ITPR2 and ITPR3; the interaction with ITPR1 is increased in the presence of AHCLY1. Interacts with AHCYL1. Interacts with HIP1R (via ENTH and I/LWEQ domains). Interacts with CASP9. Interacts with BCL2L11/BIM. Interacts with BIK. Interacts with UBQLN4. Interacts with NME2/NM23-H2. Interacts with PMAIP1/NOXA. Interacts with TPX2. Interacts with UBQLN1; in the cytoplasm. Interacts (via BH1 domain) with BECN1. Ca(2+) is required as a cofactor. In terms of processing, monoubiquitinated by UBQLN1; results in stabilization of BCL2L10 protein abundance and in relocalization from mitochondria to cytoplasm. In terms of tissue distribution, widely expressed in adult tissues. Preferentially expressed in lung, liver and kidney.

The protein resides in the mitochondrion. Its subcellular location is the nucleus membrane. The protein localises to the endoplasmic reticulum. It localises to the cytoplasm. It is found in the cytoskeleton. The protein resides in the spindle. Its function is as follows. Promotes cell survival by suppressing apoptosis induced by BAX but not BAK. Increases binding of AHCYL1/IRBIT to ITPR1. Reduces ITPR1-mediated calcium release from the endoplasmic reticulum cooperatively with AHCYL1/IRBIT under normal cellular conditions. Under apoptotic stress conditions, dissociates from ITPR1 and is displaced from mitochondria-associated endoplasmic reticulum membranes, leading to increased Ca(2+) transfer to mitochondria which promotes apoptosis. Required for the correct formation of the microtubule organizing center during oocyte cell division, potentially via regulation of protein abundance and localization of other microtubule organizing center components such as AURKA and TPX2. This is Bcl-2-like protein 10 from Homo sapiens (Human).